A 387-amino-acid chain; its full sequence is Monopolar spindle protein 2 (387 aa).

Residues 157–269 (NNIGKALEVQ…FLKDQIRRER (113 aa)) adopt a coiled-coil conformation. Residues 216-235 (RQVEDNQNSSRTSDPGSPLV) are disordered. Residues 220–230 (DNQNSSRTSDP) show a composition bias toward polar residues. A helical transmembrane segment spans residues 311 to 327 (IRIIVCFALLAGVLPYI).

The protein belongs to the MPS2 family. Interacts with BBP1, MPS3, and SPC24.

Its subcellular location is the nucleus membrane. The protein localises to the cytoplasm. It localises to the cytoskeleton. It is found in the microtubule organizing center. The protein resides in the spindle pole body. Component of the spindle pole body (SPB) required for insertion of the nascent SPB into the nuclear envelope and for the proper execution of spindle pole body (SPB) duplication. This is Monopolar spindle protein 2 (MPS2) from Saccharomyces cerevisiae (strain RM11-1a) (Baker's yeast).